The chain runs to 122 residues: Large ribosomal subunit protein uL14c (122 aa).

The protein belongs to the universal ribosomal protein uL14 family. As to quaternary structure, part of the 50S ribosomal subunit.

The protein localises to the plastid. The protein resides in the chloroplast. Functionally, binds to 23S rRNA. In Populus alba (White poplar), this protein is Large ribosomal subunit protein uL14c.